The sequence spans 279 residues: Sarcosine/dimethylglycine N-methyltransferase (279 aa).

It belongs to the methyltransferase superfamily. Monomer.

The enzyme catalyses sarcosine + 2 S-adenosyl-L-methionine = glycine betaine + 2 S-adenosyl-L-homocysteine + 2 H(+). It catalyses the reaction sarcosine + S-adenosyl-L-methionine = N,N-dimethylglycine + S-adenosyl-L-homocysteine + H(+). It carries out the reaction N,N-dimethylglycine + S-adenosyl-L-methionine = glycine betaine + S-adenosyl-L-homocysteine + H(+). The protein operates within amine and polyamine biosynthesis; betaine biosynthesis via glycine pathway; betaine from glycine: step 2/3. Its pathway is amine and polyamine biosynthesis; betaine biosynthesis via glycine pathway; betaine from glycine: step 3/3. Its activity is regulated as follows. p-chloromercuribenzoate acid inhibits 23% of the SDMT activities on sarcosine and dimethylglycine, and S-adenosylhomocysteine (AdoHcy) inhibits completely GSMT activities. Catalyzes the methylation of sarcosine and dimethylglycine to dimethylglycine and betaine, respectively, with S-adenosylmethionine (AdoMet) acting as the methyl donor. It has strict specificity for sarcosine and dimethylglycine as the methyl group acceptors. In Halorhodospira halochloris (Ectothiorhodospira halochloris), this protein is Sarcosine/dimethylglycine N-methyltransferase.